The following is a 466-amino-acid chain: Argininosuccinate lyase (466 aa).

It belongs to the lyase 1 family. Argininosuccinate lyase subfamily.

It localises to the cytoplasm. It catalyses the reaction 2-(N(omega)-L-arginino)succinate = fumarate + L-arginine. It participates in amino-acid biosynthesis; L-arginine biosynthesis; L-arginine from L-ornithine and carbamoyl phosphate: step 3/3. This is Argininosuccinate lyase from Desulfovibrio desulfuricans (strain ATCC 27774 / DSM 6949 / MB).